The following is a 608-amino-acid chain: UvrABC system protein C (608 aa).

The region spanning 16 to 94 (NRPGVYRMFD…IKEWRPPYNI (79 aa)) is the GIY-YIG domain. Residues 204–239 (NALADELNVGMEQAAMRLDFEKAAELRDQVAILRRV) enclose the UVR domain.

It belongs to the UvrC family. In terms of assembly, interacts with UvrB in an incision complex.

It is found in the cytoplasm. The UvrABC repair system catalyzes the recognition and processing of DNA lesions. UvrC both incises the 5' and 3' sides of the lesion. The N-terminal half is responsible for the 3' incision and the C-terminal half is responsible for the 5' incision. This chain is UvrABC system protein C, found in Pseudomonas aeruginosa (strain LESB58).